A 386-amino-acid chain; its full sequence is Demethylsterigmatocystin 6-O-methyltransferase (386 aa).

137 to 150 (FDISGPCTQILPDF) is a binding site for substrate. Residues 177-197 (MFEWMPQHPKHMESLGHLMAL) are substrate binding. Residues 228–229 (GG), Asp253, 273–274 (NF), and Arg289 each bind S-adenosyl-L-methionine. The active-site Proton acceptor is the His293.

Belongs to the class I-like SAM-binding methyltransferase superfamily. Cation-independent O-methyltransferase family. COMT subfamily.

It carries out the reaction 6-demethylsterigmatocystin + S-adenosyl-L-methionine = sterigmatocystin + S-adenosyl-L-homocysteine + H(+). Its pathway is mycotoxin biosynthesis; aflatoxin biosynthesis. Functionally, demethylsterigmatocystin 6-O-methyltransferase; part of the gene cluster that mediates the biosynthesis of aflatoxins, a group of polyketide-derived furanocoumarins, and part of the most toxic and carcinogenic compounds among the known mycotoxins. The four major aflatoxins produced by A.parasiticus are aflatoxin B1 (AFB1), aflatoxin B2 (AFB2), aflatoxin G1 (AFG1) and aflatoxin G2 (AFG2). Within the aflatoxin pathway, the methyltransferase aflO then catalyzes the modification of demethylsterigmatocystin (DMST) to sterigmatocystin (ST), and of dihydrodemethylsterigmatocystin (DMDHST) to dihydrosterigmatocystin (DHST). The biosynthesis of aflatoxins begins with the norsolorinic acid synthase aflC that combines a hexanoyl starter unit produced by the fatty acid synthase aflA/aflB and 7 malonyl-CoA extender units to synthesize the precursor NOR. The second step is the conversion of NOR to averantin and requires the norsolorinic acid ketoreductase aflD, which catalyzes the dehydration of norsolorinic acid to form (1'S)-averantin. The norsolorinic acid reductases aflE and aflF may also play a role in the conversion of NOR to AVN. The cytochrome P450 monooxygenase aflG then catalyzes the hydroxylation of AVN to 5'hydroxyaverantin (HAVN). The next step is performed by the 5'-hydroxyaverantin dehydrogenase aflH that transforms HAVN to 5'-oxoaverantin (OAVN) which is further converted to averufin (AVF) by aflK that plays a dual role in the pathway, as a 5'-oxoaverantin cyclase that mediates conversion of 5'-oxoaverantin, as well as a versicolorin B synthase in a later step in the pathway. The averufin oxidase aflI catalyzes the conversion of AVF to versiconal hemiacetal acetate (VHA). VHA is then the substrate for the versiconal hemiacetal acetate esterase aflJ to yield versiconal (VAL). Versicolorin B synthase aflK then converts VAL to versicolorin B (VERB) by closing the bisfuran ring of aflatoxin which is required for DNA-binding, thus giving to aflatoxin its activity as a mutagen. Then, the activity of the versicolorin B desaturase aflL leads to versicolorin A (VERA). A branch point starts from VERB since it can also be converted to dihydrodemethylsterigmatocystin (DMDHST), probably also by aflL, VERA being a precursor for aflatoxins B1 and G1, and DMDHST for aflatoxins B2 and G2. Next, the versicolorin reductase aflM and the cytochrome P450 monooxygenase aflN are involved in conversion of VERA to demethylsterigmatocystin (DMST). AflX and aflY seem also involved in this step, through probable aflX-mediated epoxide ring-opening step following versicolorin A oxidation and aflY-mediated Baeyer-Villiger oxidation required for the formation of the xanthone ring. The methyltransferase aflO then leads to the modification of DMST to sterigmatocystin (ST), and of DMDHST to dihydrosterigmatocystin (DHST). Both ST and DHST are then substrates of the O-methyltransferase aflP to yield O-methylsterigmatocystin (OMST) and dihydro-O-methylsterigmatocystin (DHOMST), respectively. Finally OMST is converted to aflatoxins B1 and G1, and DHOMST to aflatoxins B2 and G2, via the action of several enzymes including O-methylsterigmatocystin oxidoreductase aflQ, the cytochrome P450 monooxygenase aflU, but also the NADH-dependent flavin oxidoreductase nadA which is specifically required for the synthesis of AFG1. The chain is Demethylsterigmatocystin 6-O-methyltransferase from Aspergillus parasiticus (strain ATCC 56775 / NRRL 5862 / SRRC 143 / SU-1).